We begin with the raw amino-acid sequence, 304 residues long: Acetyl-coenzyme A carboxylase carboxyl transferase subunit beta (304 aa).

Positions Leu-25 to Glu-294 constitute a CoA carboxyltransferase N-terminal domain.

It belongs to the AccD/PCCB family. As to quaternary structure, acetyl-CoA carboxylase is a heterohexamer composed of biotin carboxyl carrier protein (AccB), biotin carboxylase (AccC) and two subunits each of ACCase subunit alpha (AccA) and ACCase subunit beta (AccD).

The protein resides in the cytoplasm. The catalysed reaction is N(6)-carboxybiotinyl-L-lysyl-[protein] + acetyl-CoA = N(6)-biotinyl-L-lysyl-[protein] + malonyl-CoA. The protein operates within lipid metabolism; malonyl-CoA biosynthesis; malonyl-CoA from acetyl-CoA: step 1/1. In terms of biological role, component of the acetyl coenzyme A carboxylase (ACC) complex. Biotin carboxylase (BC) catalyzes the carboxylation of biotin on its carrier protein (BCCP) and then the CO(2) group is transferred by the transcarboxylase to acetyl-CoA to form malonyl-CoA. The chain is Acetyl-coenzyme A carboxylase carboxyl transferase subunit beta from Sinorhizobium medicae (strain WSM419) (Ensifer medicae).